Reading from the N-terminus, the 708-residue chain is Quinohemoprotein alcohol dehydrogenase (708 aa).

The first 31 residues, 1–31 (MERLIDNSHGWPGRMVWLLAACLGSAAAFAQ), serve as a signal peptide directing secretion. Glu-101 serves as a coordination point for pyrroloquinoline quinone. A disulfide bond links Cys-147 and Cys-148. Pyrroloquinoline quinone is bound by residues Arg-153, Thr-198, and 214–215 (GA). Glu-216 is a binding site for Ca(2+). Position 274 (Thr-274) interacts with pyrroloquinoline quinone. Residues Asn-294 and Asp-339 each coordinate Ca(2+). Asp-339 serves as the catalytic Proton acceptor. Residues Lys-366, 425 to 426 (NW), and Val-575 contribute to the pyrroloquinoline quinone site. Positions 619–708 (YDPAKVEAGT…GTADAIRPKP (90 aa)) constitute a Cytochrome c domain. 4 residues coordinate heme c: Cys-635, Cys-638, His-639, and Met-678.

This sequence belongs to the bacterial PQQ dehydrogenase family. As to quaternary structure, monomer. Pyrroloquinoline quinone serves as cofactor. Ca(2+) is required as a cofactor. The cofactor is heme c. In the crystallographic structures Trp-543 is oxidized to 2'-hydroxytryptophan.

It localises to the periplasm. It carries out the reaction 2 oxidized [azurin] + a primary alcohol = 2 reduced [azurin] + an aldehyde + 2 H(+). Catalyzes the dye-linked oxidation of primary alcohols to the corresponding aldehydes and the (subsequent) oxidation of the aldehydes to carboxylic acids. Methanol is not a substrate. The polypeptide is Quinohemoprotein alcohol dehydrogenase (Comamonas testosteroni (Pseudomonas testosteroni)).